A 319-amino-acid chain; its full sequence is Bidirectional sugar transporter SWEET15 (319 aa).

Topologically, residues 1–10 (MAFMSMERST) are extracellular. A helical membrane pass occupies residues 11-31 (WAFTFGILGNLISLMVFLSPL). The 87-residue stretch at 13 to 99 (FTFGILGNLI…AMYLAYAPKS (87 aa)) folds into the MtN3/slv 1 domain. The Cytoplasmic portion of the chain corresponds to 32–50 (PTFYRVYRKKSTEGFQSTP). A helical transmembrane segment spans residues 51–71 (YVVTLFSCMLWMYYAFVKSGA). Position 72 (E72) is a topological domain, extracellular. A helical transmembrane segment spans residues 73–93 (LLVTINGVGCVIETVYLAMYL). The Cytoplasmic segment spans residues 94–106 (AYAPKSARMLTAK). Residues 107 to 127 (MLLGLNIGLFGVIALVTLLLS) traverse the membrane as a helical segment. Residues 128–134 (RGELRVH) are Extracellular-facing. Residues 135-155 (VLGWICVAVSLSVFAAPLSII) traverse the membrane as a helical segment. A MtN3/slv 2 domain is found at 135–219 (VLGWICVAVS…ALYMAYRSKK (85 aa)). The Cytoplasmic segment spans residues 156-167 (RLVIRTKSVEFM). The chain crosses the membrane as a helical span at residues 168–188 (PFSLSFFLVLSAVIWFLYGLL). At 189 to 191 (KKD) the chain is on the extracellular side. A helical transmembrane segment spans residues 192–212 (VFVALPNVLGFVFGVAQMALY). Topologically, residues 213–319 (MAYRSKKPLV…KPDMAIVVEV (107 aa)) are cytoplasmic.

The protein belongs to the SWEET sugar transporter family. In terms of assembly, forms homooligomers and/or heterooligomers.

The protein localises to the cell membrane. Mediates both low-affinity uptake and efflux of sugar across the plasma membrane. In terms of biological role, confers blight susceptibility. Confers TAL effector-mediated susceptibility to Xanthomonas oryzae pv. oryzae. The polypeptide is Bidirectional sugar transporter SWEET15 (SWEET15) (Oryza sativa subsp. japonica (Rice)).